Consider the following 258-residue polypeptide: Imidazole glycerol phosphate synthase subunit HisF (258 aa).

Residues Asp-11 and Asp-130 contribute to the active site.

This sequence belongs to the HisA/HisF family. Heterodimer of HisH and HisF.

It localises to the cytoplasm. The enzyme catalyses 5-[(5-phospho-1-deoxy-D-ribulos-1-ylimino)methylamino]-1-(5-phospho-beta-D-ribosyl)imidazole-4-carboxamide + L-glutamine = D-erythro-1-(imidazol-4-yl)glycerol 3-phosphate + 5-amino-1-(5-phospho-beta-D-ribosyl)imidazole-4-carboxamide + L-glutamate + H(+). It participates in amino-acid biosynthesis; L-histidine biosynthesis; L-histidine from 5-phospho-alpha-D-ribose 1-diphosphate: step 5/9. In terms of biological role, IGPS catalyzes the conversion of PRFAR and glutamine to IGP, AICAR and glutamate. The HisF subunit catalyzes the cyclization activity that produces IGP and AICAR from PRFAR using the ammonia provided by the HisH subunit. The sequence is that of Imidazole glycerol phosphate synthase subunit HisF from Methylorubrum populi (strain ATCC BAA-705 / NCIMB 13946 / BJ001) (Methylobacterium populi).